We begin with the raw amino-acid sequence, 328 residues long: MPLHHLTRFPRLELIGAPTPLEYLPRLSDYLGREIYIKRDDVTPIAMGGNKLRKLEFLVADALREGADTLITAGAIQSNHVRQTAAVAAKLGLHCVALLENPIGTTAENYLTNGNRLLLDLFNTQIEMCDALTDPDAQLQTLATRIEAQGFRPYVIPVGGSSALGAMGYVESALEIAQQCAEVVGLSSVVVASGSAGTHAGLAVGLEHLMPDVELIGVTVSRSVAEQKPRVISLQQAIAGQLALTATADIHLWDDYFAPGYGVPNDAGMEAVKLLASLEGVLLDPVYTGKAMAGLIDGISQKRFNDDGPILFIHTGGAPALFAYHPHV.

The residue at position 51 (lysine 51) is an N6-(pyridoxal phosphate)lysine.

The protein belongs to the ACC deaminase/D-cysteine desulfhydrase family. Homodimer. The cofactor is pyridoxal 5'-phosphate.

It catalyses the reaction D-cysteine + H2O = hydrogen sulfide + pyruvate + NH4(+) + H(+). Its function is as follows. Catalyzes the alpha,beta-elimination reaction of D-cysteine and of several D-cysteine derivatives. It could be a defense mechanism against D-cysteine. The polypeptide is D-cysteine desulfhydrase (Salmonella choleraesuis (strain SC-B67)).